The primary structure comprises 382 residues: ATP phosphoribosyltransferase regulatory subunit (382 aa).

The protein belongs to the class-II aminoacyl-tRNA synthetase family. HisZ subfamily. In terms of assembly, heteromultimer composed of HisG and HisZ subunits.

The protein localises to the cytoplasm. It participates in amino-acid biosynthesis; L-histidine biosynthesis; L-histidine from 5-phospho-alpha-D-ribose 1-diphosphate: step 1/9. Required for the first step of histidine biosynthesis. May allow the feedback regulation of ATP phosphoribosyltransferase activity by histidine. The chain is ATP phosphoribosyltransferase regulatory subunit from Burkholderia pseudomallei (strain 668).